Here is an 89-residue protein sequence, read N- to C-terminus: Small ribosomal subunit protein uS15 (89 aa).

The protein belongs to the universal ribosomal protein uS15 family. In terms of assembly, part of the 30S ribosomal subunit. Forms a bridge to the 50S subunit in the 70S ribosome, contacting the 23S rRNA.

In terms of biological role, one of the primary rRNA binding proteins, it binds directly to 16S rRNA where it helps nucleate assembly of the platform of the 30S subunit by binding and bridging several RNA helices of the 16S rRNA. Its function is as follows. Forms an intersubunit bridge (bridge B4) with the 23S rRNA of the 50S subunit in the ribosome. In Bacteroides thetaiotaomicron (strain ATCC 29148 / DSM 2079 / JCM 5827 / CCUG 10774 / NCTC 10582 / VPI-5482 / E50), this protein is Small ribosomal subunit protein uS15.